The primary structure comprises 419 residues: MFSRDMTIASFDPELSEAMEAERRRQEDHIELIASENYASPRVLEAQGSVLTNKYAEGYPGKRYYGGCEHVDEAERLAIERAKQLFGADYANVQPHSGSQANAAVYLALLQPGDTILGMSLDHGGHLTHGAKVNFSGRLFNAVQYGVCPDTGELDYAQLERLAKEHQPKMIIGGFSAYSRVVDWQRLRDIADSVGAYLLVDMAHVAGLVAAGVYPSPVQIADVTTTTTHKTLRGPRGGLILARANAEVEKKLNSLVFPGTQGGPLMHAIAGKAVAFKEALEPEFKAYQQQVVANARAMAQGLIERGYKVVSGGTDNHLFLIDLVDKGLTGKAADAALGKAHITVNKNTVPNDPQSPFVTSGLRIGTPAITTRGFKEEECRELAGWMADVLDDIENEDVIARVREQVTQVCRRLPVYQQG.

(6S)-5,6,7,8-tetrahydrofolate-binding positions include Leu-121 and 125 to 127; that span reads GHL. Lys-230 is subject to N6-(pyridoxal phosphate)lysine. 355–357 lines the (6S)-5,6,7,8-tetrahydrofolate pocket; sequence SPF.

This sequence belongs to the SHMT family. As to quaternary structure, homodimer. Requires pyridoxal 5'-phosphate as cofactor.

The protein resides in the cytoplasm. It catalyses the reaction (6R)-5,10-methylene-5,6,7,8-tetrahydrofolate + glycine + H2O = (6S)-5,6,7,8-tetrahydrofolate + L-serine. Its pathway is one-carbon metabolism; tetrahydrofolate interconversion. It functions in the pathway amino-acid biosynthesis; glycine biosynthesis; glycine from L-serine: step 1/1. In terms of biological role, catalyzes the reversible interconversion of serine and glycine with tetrahydrofolate (THF) serving as the one-carbon carrier. This reaction serves as the major source of one-carbon groups required for the biosynthesis of purines, thymidylate, methionine, and other important biomolecules. Also exhibits THF-independent aldolase activity toward beta-hydroxyamino acids, producing glycine and aldehydes, via a retro-aldol mechanism. This chain is Serine hydroxymethyltransferase, found in Alkalilimnicola ehrlichii (strain ATCC BAA-1101 / DSM 17681 / MLHE-1).